Here is a 173-residue protein sequence, read N- to C-terminus: MNNKKDYYLPFLLTAIVIVVDQVTKILVVQYMSVNEVIPVIGDLVNLRFVYNTGAAFSLGAGFGEIARKILLVFLPFLLLIALTGAYLKSAELTRAQRWFICGILGGGFGNLIDRFFRSEGVVDFIDVKFFGILGMERWPTFNAADSFIVCCGIGLGVNLILQGIKQKKLKDS.

The next 3 membrane-spanning stretches (helical) occupy residues Leu9–Val29, Val37–Phe57, and Ile70–Ser90. Residues Asp124 and Asp146 contribute to the active site. The chain crosses the membrane as a helical span at residues Phe142–Leu162.

This sequence belongs to the peptidase A8 family.

It is found in the cell inner membrane. The catalysed reaction is Release of signal peptides from bacterial membrane prolipoproteins. Hydrolyzes -Xaa-Yaa-Zaa-|-(S,diacylglyceryl)Cys-, in which Xaa is hydrophobic (preferably Leu), and Yaa (Ala or Ser) and Zaa (Gly or Ala) have small, neutral side chains.. It participates in protein modification; lipoprotein biosynthesis (signal peptide cleavage). Its function is as follows. This protein specifically catalyzes the removal of signal peptides from prolipoproteins. The polypeptide is Lipoprotein signal peptidase (Treponema denticola (strain ATCC 35405 / DSM 14222 / CIP 103919 / JCM 8153 / KCTC 15104)).